Consider the following 44-residue polypeptide: Relaxin (44 aa).

Gln1 bears the Pyrrolidone carboxylic acid mark. 3 cysteine pairs are disulfide-bonded: Cys3–Cys31, Cys15–Cys44, and Cys30–Cys35.

Belongs to the insulin family. As to quaternary structure, heterodimer of a B chain and an A chain linked by two disulfide bonds.

Its subcellular location is the secreted. In Carcharias taurus (Sand tiger shark), this protein is Relaxin.